We begin with the raw amino-acid sequence, 129 residues long: Flagellar assembly factor FliW (129 aa).

It belongs to the FliW family. In terms of assembly, interacts with translational regulator CsrA and flagellin(s).

It localises to the cytoplasm. In terms of biological role, acts as an anti-CsrA protein, binds CsrA and prevents it from repressing translation of its target genes, one of which is flagellin. Binds to flagellin and participates in the assembly of the flagellum. The chain is Flagellar assembly factor FliW from Campylobacter jejuni subsp. doylei (strain ATCC BAA-1458 / RM4099 / 269.97).